The sequence spans 575 residues: Suppressor of tumorigenicity 7 protein-like (575 aa).

Helical transmembrane passes span 36 to 56 (GLAG…LYAL) and 80 to 100 (FYVA…IFEW). The tract at residues 125-147 (GTESSISEPGSPSRNRENETSRQ) is disordered. Positions 126 to 137 (TESSISEPGSPS) are enriched in polar residues.

Belongs to the ST7 family.

The protein localises to the membrane. The sequence is that of Suppressor of tumorigenicity 7 protein-like (ST7L) from Homo sapiens (Human).